Reading from the N-terminus, the 387-residue chain is Phosphoglycerate kinase (387 aa).

Residues 21 to 23, Arg36, 59 to 62, Arg113, and Arg146 each bind substrate; these read DLN and HLGR. ATP is bound by residues Lys197, Glu314, and 340–343; that span reads GGDT.

It belongs to the phosphoglycerate kinase family. As to quaternary structure, monomer.

It localises to the cytoplasm. The catalysed reaction is (2R)-3-phosphoglycerate + ATP = (2R)-3-phospho-glyceroyl phosphate + ADP. It participates in carbohydrate degradation; glycolysis; pyruvate from D-glyceraldehyde 3-phosphate: step 2/5. The protein is Phosphoglycerate kinase of Pseudomonas savastanoi pv. phaseolicola (strain 1448A / Race 6) (Pseudomonas syringae pv. phaseolicola (strain 1448A / Race 6)).